The chain runs to 213 residues: Leucine-rich repeat protein 1 (213 aa).

A signal peptide spans 1-21 (MGAGALGVVAMVAAAVVVAMA). LRR repeat units follow at residues 90–113 (DHLQ…LGNL), 115–137 (NLIS…LGKL), 138–161 (TSLV…LAGI), and 163–186 (SLKV…PFEH).

As to quaternary structure, interacts with HIR1.

The protein resides in the early endosome membrane. It is found in the late endosome membrane. The protein localises to the cell membrane. Functionally, involved in plant defense response. In Oryza sativa subsp. indica (Rice), this protein is Leucine-rich repeat protein 1.